A 155-amino-acid chain; its full sequence is UPF0266 membrane protein LMHCC_1856 (155 aa).

The next 3 membrane-spanning stretches (helical) occupy residues 8-28 (IFLF…DAVI), 46-66 (RWDG…NTFF), and 70-90 (PFST…ICFF).

Belongs to the UPF0266 family.

It is found in the cell membrane. The polypeptide is UPF0266 membrane protein LMHCC_1856 (Listeria monocytogenes serotype 4a (strain HCC23)).